A 350-amino-acid chain; its full sequence is Cephaeline 6'-O-methyltransferase CiOMT (350 aa).

5 residues coordinate S-adenosyl-L-methionine: Gly193, Asp216, Asp236, Met237, and Lys250. His254 acts as the Proton acceptor in catalysis.

The protein belongs to the class I-like SAM-binding methyltransferase superfamily. Cation-independent O-methyltransferase family.

Its subcellular location is the cytoplasm. The protein resides in the cytosol. It carries out the reaction 7'-O-demethylcephaeline + S-adenosyl-L-methionine = cephaeline + S-adenosyl-L-homocysteine + H(+). It catalyses the reaction cephaeline + S-adenosyl-L-methionine = emetine + S-adenosyl-L-homocysteine + H(+). Its pathway is alkaloid biosynthesis. Its activity is regulated as follows. Inhibited by Co(2+), Ni(2+), Zn(2+) and Mn(2+) ions. Its function is as follows. O-methyltransferase involved in the biosynthesis of ipecac and benzylisoquinoline monoterpenoid-isoquinoline alkaloids natural products, starting by the condensation of dopamine and secologanin, and including emetine and cephaeline, drugs used both as anti-protozoal (e.g. treatment of ameobiasis) and as emetic agents. Catalyzes successively the 7'-O-methylation of 7'-O-demethylcephaeline to produce cephaeline, and its 6'-O-methylation to produce emetine. This is Cephaeline 6'-O-methyltransferase CiOMT from Carapichea ipecacuanha (Ipecac).